We begin with the raw amino-acid sequence, 78 residues long: Conotoxin ArMKLT2-0313 (78 aa).

An N-terminal signal peptide occupies residues 1 to 22 (MKLTCVLIIAVLCLTVCQLITA). Positions 23–47 (DYLRDKQKYRSVRLRDGMLNFKGSR) are excised as a propeptide. At Gln48 the chain carries Pyrrolidone carboxylic acid. 3 cysteine pairs are disulfide-bonded: Cys49/Cys62, Cys56/Cys67, and Cys61/Cys75.

Belongs to the conotoxin O1 superfamily. As to expression, expressed by the venom duct.

The protein localises to the secreted. The polypeptide is Conotoxin ArMKLT2-0313 (Conus arenatus (Sand-dusted cone)).